The chain runs to 237 residues: Cytochrome c oxidase subunit 2 (237 aa).

The Mitochondrial intermembrane portion of the chain corresponds to 1–30 (MNLVAPTPWGLFFQDSATPQMEGIEELHNN). Residues 31-51 (IMFYLTIILFSVTWMMITIIK) form a helical membrane-spanning segment. The Mitochondrial matrix segment spans residues 52-67 (SFVNTKSPISHKYMNH). The chain crosses the membrane as a helical span at residues 68 to 94 (GTLIELIWTITPAVILILIAFPSFKLL). The Mitochondrial intermembrane portion of the chain corresponds to 95-237 (YLMDEVMDPS…SVSLKNFYYD (143 aa)). Cu cation contacts are provided by H176, C211, E213, C215, H219, and M222. Mg(2+) is bound at residue E213.

It belongs to the cytochrome c oxidase subunit 2 family. In terms of assembly, component of the cytochrome c oxidase (complex IV, CIV), a multisubunit enzyme composed of a catalytic core of 3 subunits and several supernumerary subunits. The complex exists as a monomer or a dimer and forms supercomplexes (SCs) in the inner mitochondrial membrane with ubiquinol-cytochrome c oxidoreductase (cytochrome b-c1 complex, complex III, CIII). Requires Cu cation as cofactor.

Its subcellular location is the mitochondrion inner membrane. The catalysed reaction is 4 Fe(II)-[cytochrome c] + O2 + 8 H(+)(in) = 4 Fe(III)-[cytochrome c] + 2 H2O + 4 H(+)(out). In terms of biological role, component of the cytochrome c oxidase, the last enzyme in the mitochondrial electron transport chain which drives oxidative phosphorylation. The respiratory chain contains 3 multisubunit complexes succinate dehydrogenase (complex II, CII), ubiquinol-cytochrome c oxidoreductase (cytochrome b-c1 complex, complex III, CIII) and cytochrome c oxidase (complex IV, CIV), that cooperate to transfer electrons derived from NADH and succinate to molecular oxygen, creating an electrochemical gradient over the inner membrane that drives transmembrane transport and the ATP synthase. Cytochrome c oxidase is the component of the respiratory chain that catalyzes the reduction of oxygen to water. Electrons originating from reduced cytochrome c in the intermembrane space (IMS) are transferred via the dinuclear copper A center (CU(A)) of subunit 2 and heme A of subunit 1 to the active site in subunit 1, a binuclear center (BNC) formed by heme A3 and copper B (CU(B)). The BNC reduces molecular oxygen to 2 water molecules using 4 electrons from cytochrome c in the IMS and 4 protons from the mitochondrial matrix. This is Cytochrome c oxidase subunit 2 (COX2) from Trichophyton rubrum (Athlete's foot fungus).